The following is a 337-amino-acid chain: Succinylglutamate desuccinylase (337 aa).

Zn(2+) contacts are provided by His59, Glu62, and His152. The active site involves Glu216.

Belongs to the AspA/AstE family. Succinylglutamate desuccinylase subfamily. The cofactor is Zn(2+).

It carries out the reaction N-succinyl-L-glutamate + H2O = L-glutamate + succinate. Its pathway is amino-acid degradation; L-arginine degradation via AST pathway; L-glutamate and succinate from L-arginine: step 5/5. Functionally, transforms N(2)-succinylglutamate into succinate and glutamate. This Ectopseudomonas mendocina (strain ymp) (Pseudomonas mendocina) protein is Succinylglutamate desuccinylase.